Reading from the N-terminus, the 170-residue chain is Cyclic dof factor 4 (170 aa).

The segment at 25–51 is disordered; the sequence is NEEETHPPEQEATIAVRSSSSSDLTAE. The Dof-type zinc finger occupies 58-112; the sequence is IACPRCKSMETKFCYFNNYNVNQPRHFCKGCHRYWTAGGALRNVPVGAGRRKSKP. Residues cysteine 60, cysteine 63, cysteine 85, and cysteine 88 each contribute to the Zn(2+) site.

Expressed in the vasculature of cotyledons and hypocotyls, leaves and roots.

The protein resides in the nucleus. Its function is as follows. Transcription factor that binds specifically to a 5'-AA[AG]G-3' consensus core sequence. Transcriptional repressor of 'CONSTANS' expression. Regulates a photoperiodic flowering response. The protein is Cyclic dof factor 4 (CDF4) of Arabidopsis thaliana (Mouse-ear cress).